The primary structure comprises 118 residues: Large ribosomal subunit protein bL20 (118 aa).

The protein belongs to the bacterial ribosomal protein bL20 family.

Its function is as follows. Binds directly to 23S ribosomal RNA and is necessary for the in vitro assembly process of the 50S ribosomal subunit. It is not involved in the protein synthesizing functions of that subunit. The protein is Large ribosomal subunit protein bL20 of Francisella tularensis subsp. tularensis (strain WY96-3418).